The following is a 156-amino-acid chain: SsrA-binding protein (156 aa).

The protein belongs to the SmpB family.

It localises to the cytoplasm. In terms of biological role, required for rescue of stalled ribosomes mediated by trans-translation. Binds to transfer-messenger RNA (tmRNA), required for stable association of tmRNA with ribosomes. tmRNA and SmpB together mimic tRNA shape, replacing the anticodon stem-loop with SmpB. tmRNA is encoded by the ssrA gene; the 2 termini fold to resemble tRNA(Ala) and it encodes a 'tag peptide', a short internal open reading frame. During trans-translation Ala-aminoacylated tmRNA acts like a tRNA, entering the A-site of stalled ribosomes, displacing the stalled mRNA. The ribosome then switches to translate the ORF on the tmRNA; the nascent peptide is terminated with the 'tag peptide' encoded by the tmRNA and targeted for degradation. The ribosome is freed to recommence translation, which seems to be the essential function of trans-translation. The sequence is that of SsrA-binding protein from Trichodesmium erythraeum (strain IMS101).